Reading from the N-terminus, the 379-residue chain is Chaperone protein DnaJ (379 aa).

One can recognise a J domain in the interval Asp6 to Gly71. The CR-type zinc finger occupies Gly138 to Thr220. Zn(2+) contacts are provided by Cys151, Cys154, Cys168, Cys171, Cys194, Cys197, Cys208, and Cys211. CXXCXGXG motif repeat units lie at residues Cys151–Gly158, Cys168–Gly175, Cys194–Gly201, and Cys208–Gly215.

The protein belongs to the DnaJ family. As to quaternary structure, homodimer. Requires Zn(2+) as cofactor.

The protein resides in the cytoplasm. Its function is as follows. Participates actively in the response to hyperosmotic and heat shock by preventing the aggregation of stress-denatured proteins and by disaggregating proteins, also in an autonomous, DnaK-independent fashion. Unfolded proteins bind initially to DnaJ; upon interaction with the DnaJ-bound protein, DnaK hydrolyzes its bound ATP, resulting in the formation of a stable complex. GrpE releases ADP from DnaK; ATP binding to DnaK triggers the release of the substrate protein, thus completing the reaction cycle. Several rounds of ATP-dependent interactions between DnaJ, DnaK and GrpE are required for fully efficient folding. Also involved, together with DnaK and GrpE, in the DNA replication of plasmids through activation of initiation proteins. The sequence is that of Chaperone protein DnaJ from Ruminiclostridium cellulolyticum (strain ATCC 35319 / DSM 5812 / JCM 6584 / H10) (Clostridium cellulolyticum).